A 378-amino-acid polypeptide reads, in one-letter code: GTP cyclohydrolase-2 (378 aa).

Residues 1-180 are DHBP synthase-like; it reads MEEVSSHVKS…IKDMIEFRIK (180 aa). The segment at 181 to 378 is GTP cyclohydrolase II; the sequence is SEKIVERVIE…KMGHLICFND (198 aa). 229-233 contributes to the GTP binding site; the sequence is RIHSE. Residues cysteine 234, cysteine 245, and cysteine 247 each contribute to the Zn(2+) site. GTP contacts are provided by residues glutamine 250, 273–275, and threonine 295; that span reads EGR. The Proton acceptor role is filled by aspartate 307. Residue arginine 309 is the Nucleophile of the active site. GTP-binding residues include threonine 330 and lysine 335.

In the N-terminal section; belongs to the DHBP synthase family. This sequence in the C-terminal section; belongs to the GTP cyclohydrolase II family. Requires Zn(2+) as cofactor.

It carries out the reaction GTP + 4 H2O = 2,5-diamino-6-hydroxy-4-(5-phosphoribosylamino)-pyrimidine + formate + 2 phosphate + 3 H(+). Its pathway is cofactor biosynthesis; riboflavin biosynthesis; 5-amino-6-(D-ribitylamino)uracil from GTP: step 1/4. In terms of biological role, catalyzes the conversion of GTP to 2,5-diamino-6-ribosylamino-4(3H)-pyrimidinone 5'-phosphate (DARP), formate and pyrophosphate. This Archaeoglobus fulgidus (strain ATCC 49558 / DSM 4304 / JCM 9628 / NBRC 100126 / VC-16) protein is GTP cyclohydrolase-2 (ribA).